The sequence spans 182 residues: uncharacterized protein (182 aa).

The signal sequence occupies residues 1–26 (MIRALCTIVLIAAGVAVALYLSLVYG). A disordered region spans residues 68-90 (YTERPYPVSSTQSPTTTQSPTTT). The segment covering 74 to 90 (PVSSTQSPTTTQSPTTT) has biased composition (low complexity).

This is an uncharacterized protein from Dryophytes versicolor (chameleon treefrog).